The chain runs to 257 residues: NAD-dependent protein deacylase (257 aa).

The Deacetylase sirtuin-type domain occupies 1 to 252 (MLGHAAKLLA…LRRVKDIMAE (252 aa)). 20–39 (GAGISAESGIPTFRGRNGLW) contributes to the NAD(+) binding site. Substrate contacts are provided by Y64 and R67. 98–101 (QNVD) lines the NAD(+) pocket. H116 (proton acceptor) is an active-site residue. The Zn(2+) site is built by C124, C127, C151, and C154. NAD(+) is bound by residues 191-193 (GTS), 217-219 (NVE), and A235.

Belongs to the sirtuin family. Class III subfamily. Zn(2+) serves as cofactor.

The protein resides in the cytoplasm. It catalyses the reaction N(6)-acetyl-L-lysyl-[protein] + NAD(+) + H2O = 2''-O-acetyl-ADP-D-ribose + nicotinamide + L-lysyl-[protein]. The catalysed reaction is N(6)-succinyl-L-lysyl-[protein] + NAD(+) + H2O = 2''-O-succinyl-ADP-D-ribose + nicotinamide + L-lysyl-[protein]. Functionally, NAD-dependent lysine deacetylase and desuccinylase that specifically removes acetyl and succinyl groups on target proteins. Modulates the activities of several proteins which are inactive in their acylated form. Deacetylates the N-terminal lysine residue of Alba, the major archaeal chromatin protein and that, in turn, increases Alba's DNA binding affinity, thereby repressing transcription. This chain is NAD-dependent protein deacylase, found in Thermococcus kodakarensis (strain ATCC BAA-918 / JCM 12380 / KOD1) (Pyrococcus kodakaraensis (strain KOD1)).